The chain runs to 1061 residues: Transmembrane protease serine 9 (1061 aa).

Residues 3 to 31 (PAAPDLQPVPEVTKGVPVPTPDSGCCRAA) are Cytoplasmic-facing. A helical transmembrane segment spans residues 32-52 (VTTVVAISVASLTLGVLSAFL). Topologically, residues 53 to 1061 (SAQGVQVEHT…LGWIGQNIRE (1009 aa)) are extracellular. The 38-residue stretch at 155 to 192 (HCPGNAFSCQNSQCVSKENPECDDRVDCSDGSDEAQCD) folds into the LDL-receptor class A domain. Cystine bridges form between Cys-156–Cys-168, Cys-163–Cys-182, Cys-176–Cys-191, and Cys-230–Cys-246. A Peptidase S1 1 domain is found at 205–438 (IVGGAEAAPG…LRDWILEVTS (234 aa)). Residues His-245 and Asp-294 each act as charge relay system in the active site. 3 disulfides stabilise this stretch: Cys-328–Cys-395, Cys-360–Cys-374, and Cys-385–Cys-414. The active-site Charge relay system is the Ser-389. Residues 443–499 (PVVPTEAPAPITPSTPWPTSPESRVPNTTAKPTVAPTPAPLHPSTAAKPQECGARPA) are disordered. A compositionally biased stretch (pro residues) spans 452–461 (PITPSTPWPT). Over residues 462-476 (SPESRVPNTTAKPTV) the composition is skewed to low complexity. N-linked (GlcNAc...) asparagine glycosylation is present at Asn-469. Residues 506 to 738 (IVGGISAVSG…LKDWILKAMS (233 aa)) enclose the Peptidase S1 2 domain. A disulfide bridge connects residues Cys-531 and Cys-547. His-546 functions as the Charge relay system in the catalytic mechanism. Asn-549 is a glycosylation site (N-linked (GlcNAc...) asparagine). The active-site Charge relay system is the Asp-594. Cystine bridges form between Cys-628-Cys-695, Cys-660-Cys-674, and Cys-685-Cys-714. Asn-640 and Asn-665 each carry an N-linked (GlcNAc...) asparagine glycan. Residue Ser-689 is the Charge relay system of the active site. Residues 740–752 (DPSSTAHPHTSST) show a composition bias toward low complexity. 2 disordered regions span residues 740 to 771 (DPSS…IPEA) and 790 to 810 (LNTT…APGT). Asn-791 carries N-linked (GlcNAc...) asparagine glycosylation. The span at 792–808 (TTLSARSTTTRRQTPAP) shows a compositional bias: low complexity. The Peptidase S1 3 domain maps to 830-1060 (IVGGSAASLG…VLGWIGQNIR (231 aa)). Disulfide bonds link Cys-856–Cys-872, Cys-951–Cys-1017, Cys-982–Cys-996, and Cys-1007–Cys-1036.

This sequence belongs to the peptidase S1 family. Post-translationally, proteolytically cleaved to generate 3 independent serine protease chains. The cleaved chains may remain attached to the membrane thanks to disulfide bonds. It is unclear whether cleavage always takes place.

The protein resides in the cell membrane. With respect to regulation, inhibited by serine protease inhibitors PMSF and 4-(2-aminoethyl)benzenesulfonyl fluoride, but not by EDTA. Its function is as follows. Serase-1 and serase-2 are serine proteases that hydrolyze the peptides N-t-Boc-Gln-Ala-Arg-AMC and N-t-Boc-Gln-Gly-Arg-AMC. In contrast, N-t-Boc-Ala-Phe-Lys-AMC and N-t-Boc-Ala-Pro-Ala-AMC are not significantly hydrolyzed. The polypeptide is Transmembrane protease serine 9 (Tmprss9) (Rattus norvegicus (Rat)).